A 684-amino-acid polypeptide reads, in one-letter code: Probable pectin methyltransferase QUA2 (684 aa).

The tract at residues 1–35 (MSMPLQRGISGVRVSDSSDDLRDSQMKDKTERARS) is disordered. Residues 1-86 (MSMPLQRGIS…RHRLMLLFLK (86 aa)) lie on the Cytoplasmic side of the membrane. Residues 19 to 35 (DDLRDSQMKDKTERARS) are compositionally biased toward basic and acidic residues. A helical; Signal-anchor for type II membrane protein membrane pass occupies residues 87 to 107 (ISLVLIVVIALAGSFWWTISI). At 108 to 684 (STSSRGHVYH…QKPFTKRQSI (577 aa)) the chain is on the lumenal side. Asparagine 161 and asparagine 476 each carry an N-linked (GlcNAc...) asparagine glycan.

Belongs to the methyltransferase superfamily. As to expression, ubiquitous.

Its subcellular location is the golgi apparatus membrane. The protein operates within glycan metabolism; pectin biosynthesis. Its function is as follows. May be involved in the synthesis of homogalacturonan. Required for normal cell adhesion and plant development. This is Probable pectin methyltransferase QUA2 (QUA2) from Arabidopsis thaliana (Mouse-ear cress).